The sequence spans 335 residues: MKISRSLSTVEVHTGGEAFRIVTSGLPRLPGDTIVQRRAWLKENADEIRRALMFEPRGHADMYGGYLTEPVSPTADFGVIFLHNEGYSDHCGHGVIALSTAAVELGWVQRTVPETRVGIDAPCGFIEAFVQWDGEHAGPVRFVNVPSFIWRRDVSVDTPSFGTVTGDIAYGGAFYFYVDGAPFDLPVREAAVEKLIRFGAEVKAAANAKYPVVHPEIPEINHIYGTIIANAPRHPGSTQANCCVFADREVDRSPTGSGTGGRVAQLYQRGVLAAGDTLVNESIVGTVFKGRVLRETMVGDIPAVIPEVEGSAHICGFANWIVDERDPLTYGFLVR.

The active-site Proton acceptor is Cys-91. Residues 92-93, Asp-251, and 256-257 contribute to the substrate site; these read GH and GS.

The protein belongs to the proline racemase family.

The enzyme catalyses trans-3-hydroxy-L-proline = 1-pyrroline-2-carboxylate + H2O. Catalyzes the dehydration of trans-3-hydroxy-L-proline (t3LHyp) to Delta(1)-pyrroline-2-carboxylate (Pyr2C). Is likely involved in a degradation pathway that converts t3LHyp to L-proline. Displays neither trans-4-hydroxy-L-proline (t4LHyp) epimerase nor proline racemase activity. In Burkholderia ambifaria (strain ATCC BAA-244 / DSM 16087 / CCUG 44356 / LMG 19182 / AMMD) (Burkholderia cepacia (strain AMMD)), this protein is Trans-3-hydroxy-L-proline dehydratase.